An 820-amino-acid chain; its full sequence is Protein O-mannosyl-transferase 2 (820 aa).

Residues 124 to 144 form a helical membrane-spanning segment; sequence AAGWWATLAVVTLLSFATRFH. N-linked (GlcNAc...) asparagine glycosylation occurs at asparagine 168. The next 5 membrane-spanning stretches (helical) occupy residues 170–190, 216–236, 261–281, 301–321, and 353–373; these read TFFF…AGYL, GFCA…VLDL, QYIL…LSMV, LTGI…FIIV, and ILCL…VHVM. N-linked (GlcNAc...) asparagine glycosylation is found at asparagine 376 and asparagine 400. 3 consecutive MIR domains span residues 404 to 460, 473 to 529, and 534 to 591; these read PEHL…IKKY, VEFV…IEVV, and GNRI…IEEH. N-linked (GlcNAc...) asparagine glycosylation is present at asparagine 515. Asparagine 598 and asparagine 653 each carry an N-linked (GlcNAc...) asparagine glycan. The next 4 membrane-spanning stretches (helical) occupy residues 659–679, 713–733, 735–755, and 774–794; these read VYLL…VLYL, LLLG…ILYF, HYFP…DTLL, and VGIL…HPLA.

The protein belongs to the glycosyltransferase 39 family. In terms of processing, N-glycosylated. In terms of tissue distribution, ubiquitous. Highly expressed in the acrosome of cap phase spermatids, in spermatocytes and liver. Isoform 1 seems to be testis-specific.

It is found in the endoplasmic reticulum membrane. It catalyses the reaction a di-trans,poly-cis-dolichyl beta-D-mannosyl phosphate + L-seryl-[protein] = 3-O-(alpha-D-mannosyl)-L-seryl-[protein] + a di-trans,poly-cis-dolichyl phosphate + H(+). The enzyme catalyses a di-trans,poly-cis-dolichyl beta-D-mannosyl phosphate + L-threonyl-[protein] = 3-O-(alpha-D-mannosyl)-L-threonyl-[protein] + a di-trans,poly-cis-dolichyl phosphate + H(+). It participates in protein modification; protein glycosylation. Transfers mannosyl residues to the hydroxyl group of serine or threonine residues. Coexpression of both POMT1 and POMT2 is necessary for enzyme activity, expression of either POMT1 or POMT2 alone is insufficient. Essentially dedicated to O-mannosylation of alpha-DAG1 and few other proteins but not of cadherins and protocaherins. The polypeptide is Protein O-mannosyl-transferase 2 (Pomt2) (Mus musculus (Mouse)).